Reading from the N-terminus, the 394-residue chain is Phosphoglycerate kinase (394 aa).

Substrate-binding positions include 21 to 23 (DFN), Arg37, 60 to 63 (HLGR), Arg119, and Arg152. ATP is bound by residues Lys202, Glu324, and 350–353 (GGDS).

This sequence belongs to the phosphoglycerate kinase family. Monomer.

It is found in the cytoplasm. The catalysed reaction is (2R)-3-phosphoglycerate + ATP = (2R)-3-phospho-glyceroyl phosphate + ADP. The protein operates within carbohydrate degradation; glycolysis; pyruvate from D-glyceraldehyde 3-phosphate: step 2/5. In Herpetosiphon aurantiacus (strain ATCC 23779 / DSM 785 / 114-95), this protein is Phosphoglycerate kinase.